A 422-amino-acid polypeptide reads, in one-letter code: Serine hydroxymethyltransferase (422 aa).

(6S)-5,6,7,8-tetrahydrofolate-binding positions include leucine 118 and 122 to 124 (GHL). Lysine 227 bears the N6-(pyridoxal phosphate)lysine mark. (6S)-5,6,7,8-tetrahydrofolate is bound by residues glutamate 243 and 351–353 (SPF).

It belongs to the SHMT family. As to quaternary structure, homodimer. The cofactor is pyridoxal 5'-phosphate.

It is found in the cytoplasm. It catalyses the reaction (6R)-5,10-methylene-5,6,7,8-tetrahydrofolate + glycine + H2O = (6S)-5,6,7,8-tetrahydrofolate + L-serine. It functions in the pathway one-carbon metabolism; tetrahydrofolate interconversion. The protein operates within amino-acid biosynthesis; glycine biosynthesis; glycine from L-serine: step 1/1. In terms of biological role, catalyzes the reversible interconversion of serine and glycine with tetrahydrofolate (THF) serving as the one-carbon carrier. This reaction serves as the major source of one-carbon groups required for the biosynthesis of purines, thymidylate, methionine, and other important biomolecules. Also exhibits THF-independent aldolase activity toward beta-hydroxyamino acids, producing glycine and aldehydes, via a retro-aldol mechanism. This Fervidobacterium nodosum (strain ATCC 35602 / DSM 5306 / Rt17-B1) protein is Serine hydroxymethyltransferase.